A 331-amino-acid polypeptide reads, in one-letter code: Biotin synthase (331 aa).

The region spanning P52–R277 is the Radical SAM core domain. [4Fe-4S] cluster is bound by residues C67, C71, and C74. [2Fe-2S] cluster contacts are provided by C110, C202, and R272.

This sequence belongs to the radical SAM superfamily. Biotin synthase family. As to quaternary structure, homodimer. [4Fe-4S] cluster is required as a cofactor. [2Fe-2S] cluster serves as cofactor.

It carries out the reaction (4R,5S)-dethiobiotin + (sulfur carrier)-SH + 2 reduced [2Fe-2S]-[ferredoxin] + 2 S-adenosyl-L-methionine = (sulfur carrier)-H + biotin + 2 5'-deoxyadenosine + 2 L-methionine + 2 oxidized [2Fe-2S]-[ferredoxin]. It participates in cofactor biosynthesis; biotin biosynthesis; biotin from 7,8-diaminononanoate: step 2/2. Catalyzes the conversion of dethiobiotin (DTB) to biotin by the insertion of a sulfur atom into dethiobiotin via a radical-based mechanism. This is Biotin synthase from Salinispora arenicola (strain CNS-205).